Consider the following 412-residue polypeptide: Transforming growth factor beta-3 proprotein (412 aa).

Positions 1–23 (MKMHLQRALVVLALLNLATVSLS) are cleaved as a signal peptide. N-linked (GlcNAc...) asparagine glycans are attached at residues asparagine 74, asparagine 135, and asparagine 142. Residues 261–263 (RGD) carry the Cell attachment site motif. Residue glutamine 293 is modified to N5-methylglutamine. Disulfide bonds link cysteine 307–cysteine 316, cysteine 315–cysteine 378, cysteine 344–cysteine 409, and cysteine 348–cysteine 411.

Belongs to the TGF-beta family. In terms of assembly, interacts with ASPN. Latency-associated peptide: Homodimer; disulfide-linked. Latency-associated peptide: Interacts with Transforming growth factor beta-3 (TGF-beta-3) chain; interaction is non-covalent and maintains (TGF-beta-3) in a latent state. Latency-associated peptide: Interacts with LRRC32/GARP; leading to regulate activation of TGF-beta-3 and promote epithelial fusion during palate development. Latency-associated peptide: Interacts (via cell attachment site) with integrins, leading to release of the active TGF-beta-3. Transforming growth factor beta-3: Homodimer; disulfide-linked. Transforming growth factor beta-3: Interacts with TGF-beta receptors (TGFBR1 and TGFBR2), leading to signal transduction. In terms of processing, transforming growth factor beta-3 proprotein: The precursor proprotein is cleaved in the Golgi apparatus to form Transforming growth factor beta-3 (TGF-beta-3) and Latency-associated peptide (LAP) chains, which remain non-covalently linked, rendering TGF-beta-3 inactive. Post-translationally, methylated at Gln-293 by N6AMT1. As to expression, expressed in cardiomyocytes.

It is found in the secreted. The protein localises to the extracellular space. The protein resides in the extracellular matrix. Transforming growth factor beta-3 proprotein: Precursor of the Latency-associated peptide (LAP) and Transforming growth factor beta-3 (TGF-beta-3) chains, which constitute the regulatory and active subunit of TGF-beta-3, respectively. In terms of biological role, required to maintain the Transforming growth factor beta-3 (TGF-beta-3) chain in a latent state during storage in extracellular matrix. Associates non-covalently with TGF-beta-3 and regulates its activation via interaction with 'milieu molecules', such as LTBP1 and LRRC32/GARP, that control activation of TGF-beta-3. Interaction with integrins results in distortion of the Latency-associated peptide chain and subsequent release of the active TGF-beta-3. Its function is as follows. Transforming growth factor beta-3: Multifunctional protein that regulates embryogenesis and cell differentiation and is required in various processes such as secondary palate development. Activation into mature form follows different steps: following cleavage of the proprotein in the Golgi apparatus, Latency-associated peptide (LAP) and Transforming growth factor beta-3 (TGF-beta-3) chains remain non-covalently linked rendering TGF-beta-3 inactive during storage in extracellular matrix. At the same time, LAP chain interacts with 'milieu molecules', such as LTBP1 and LRRC32/GARP that control activation of TGF-beta-3 and maintain it in a latent state during storage in extracellular milieus. TGF-beta-3 is released from LAP by integrins: integrin-binding results in distortion of the LAP chain and subsequent release of the active TGF-beta-3. Once activated following release of LAP, TGF-beta-3 acts by binding to TGF-beta receptors (TGFBR1 and TGFBR2), which transduce signal. This is Transforming growth factor beta-3 proprotein (Tgfb3) from Rattus norvegicus (Rat).